Here is a 255-residue protein sequence, read N- to C-terminus: ATP synthase subunit a 2 (255 aa).

A run of 5 helical transmembrane segments spans residues 26 to 46, 86 to 106, 131 to 151, 205 to 225, and 230 to 250; these read SINI…IGVF, LIGP…SIDL, DVNV…GYTL, MIFI…SVPW, and ILIV…YLAM.

It belongs to the ATPase A chain family. In terms of assembly, F-type ATPases have 2 components, CF(1) - the catalytic core - and CF(0) - the membrane proton channel. CF(1) has five subunits: alpha(3), beta(3), gamma(1), delta(1), epsilon(1). CF(0) has three main subunits: a(1), b(2) and c(9-12). The alpha and beta chains form an alternating ring which encloses part of the gamma chain. CF(1) is attached to CF(0) by a central stalk formed by the gamma and epsilon chains, while a peripheral stalk is formed by the delta and b chains.

It is found in the cell inner membrane. In terms of biological role, key component of the proton channel; it plays a direct role in the translocation of protons across the membrane. This chain is ATP synthase subunit a 2, found in Photobacterium profundum (strain SS9).